The following is a 348-amino-acid chain: Putative methylthioribose-1-phosphate isomerase (348 aa).

Substrate is bound by residues 55 to 57 (RGA), Arg-98, and Gln-203. Residue Asp-244 is the Proton donor of the active site. 253–254 (NK) contributes to the substrate binding site.

The protein belongs to the eIF-2B alpha/beta/delta subunits family. MtnA subfamily.

The enzyme catalyses 5-(methylsulfanyl)-alpha-D-ribose 1-phosphate = 5-(methylsulfanyl)-D-ribulose 1-phosphate. Catalyzes the interconversion of methylthioribose-1-phosphate (MTR-1-P) into methylthioribulose-1-phosphate (MTRu-1-P). This is Putative methylthioribose-1-phosphate isomerase from Methanosarcina acetivorans (strain ATCC 35395 / DSM 2834 / JCM 12185 / C2A).